We begin with the raw amino-acid sequence, 336 residues long: MSAPGGGRSGPAEWGGFEDNMQGGGSAVIDMENMDDTSGSSFEDMGEMHQRMKEEEEEEAEGEAGAGGEEDGEFLGMKGLQGQLGRQVADQMWQVGKRQASKAFSLYANIDILRPYFDVEPVQVRTRLLESMVPVKMINFPQKIAGELYGPLMLVFTLVAILLHGMKTSDTIIREGTLMGTAIGTCFGYWLGVSSFIYFLAYLCNAQITMVQMLSLLGYGLFGHCITLLVTYNIHFHSLFYIFWLVVGGLSTLRMVAVLVSRTVGHTQRLILCGTLAALHMLFLLYLHFAYHKVVEGILDTLEGPNMPPFQRVARDIPVVSNAVLNTTAKANAMTL.

The tract at residues 1–73 is disordered; the sequence is MSAPGGGRSG…AGAGGEEDGE (73 aa). Topologically, residues 1–143 are cytoplasmic; it reads MSAPGGGRSG…PVKMINFPQK (143 aa). A compositionally biased stretch (acidic residues) spans 55 to 73; that stretch reads EEEEEAEGEAGAGGEEDGE. A helical transmembrane segment spans residues 144-164; sequence IAGELYGPLMLVFTLVAILLH. At 165–182 the chain is on the lumenal side; sequence GMKTSDTIIREGTLMGTA. A helical transmembrane segment spans residues 183–203; the sequence is IGTCFGYWLGVSSFIYFLAYL. The Cytoplasmic portion of the chain corresponds to 204–209; it reads CNAQIT. The chain crosses the membrane as a helical span at residues 210 to 230; sequence MVQMLSLLGYGLFGHCITLLV. Over 231 to 239 the chain is Lumenal; the sequence is TYNIHFHSL. Residues 240 to 260 form a helical membrane-spanning segment; the sequence is FYIFWLVVGGLSTLRMVAVLV. Residues 261-269 lie on the Cytoplasmic side of the membrane; that stretch reads SRTVGHTQR. A helical transmembrane segment spans residues 270-290; that stretch reads LILCGTLAALHMLFLLYLHFA. The Lumenal segment spans residues 291–336; it reads YHKVVEGILDTLEGPNMPPFQRVARDIPVVSNAVLNTTAKANAMTL. N-linked (GlcNAc...) asparagine glycosylation is present at N326.

It belongs to the YIP1 family.

It is found in the cell membrane. It localises to the golgi apparatus. Its subcellular location is the cis-Golgi network membrane. The protein resides in the cytoplasm. In terms of biological role, involved in the maintenance of the Golgi structure. May play a role in hematopoiesis. This chain is Protein YIPF3 (YIPF3), found in Gallus gallus (Chicken).